The primary structure comprises 189 residues: MVMLLLLLSALAGLFGAAEGQEFRLGKCTSPPVQENFDPNKYFGRWYEIEKIPTTFEKGRCIQANYSLKENGKIKVLNQELRADGTVNQIEGEASPVNITEPAKLEVKFFWFMPSAPYWVLATDYENYALVYSCVSIINLFRVDYAWILARNRHLPSETVDFLKNILTSNNIDVKKMTVTDQENCPEFS.

Residues Met-1 to Gly-20 form the signal peptide. Gln-21 carries the pyrrolidone carboxylic acid modification. Intrachain disulfides connect Cys-28/Cys-134 and Cys-61/Cys-185. N-linked (GlcNAc...) asparagine glycans are attached at residues Asn-65 and Asn-98.

It belongs to the calycin superfamily. Lipocalin family. Homodimer.

Its subcellular location is the secreted. Functionally, APOD occurs in the macromolecular complex with lecithin-cholesterol acyltransferase. It is probably involved in the transport and binding of bilin. Appears to be able to transport a variety of ligands in a number of different contexts. This is Apolipoprotein D (APOD) from Macaca fascicularis (Crab-eating macaque).